A 449-amino-acid polypeptide reads, in one-letter code: Glucose-6-phosphate isomerase (449 aa).

The active-site Proton donor is the Glu291. Active-site residues include His312 and Lys426.

The protein belongs to the GPI family.

Its subcellular location is the cytoplasm. The enzyme catalyses alpha-D-glucose 6-phosphate = beta-D-fructose 6-phosphate. It participates in carbohydrate biosynthesis; gluconeogenesis. It functions in the pathway carbohydrate degradation; glycolysis; D-glyceraldehyde 3-phosphate and glycerone phosphate from D-glucose: step 2/4. Functionally, catalyzes the reversible isomerization of glucose-6-phosphate to fructose-6-phosphate. The sequence is that of Glucose-6-phosphate isomerase from Streptococcus thermophilus (strain CNRZ 1066).